The sequence spans 216 residues: uncharacterized protein (216 aa).

The interval 55-216 (NEDKAEAMSN…NEKEKDVNPK (162 aa)) is disordered. 3 stretches are compositionally biased toward basic and acidic residues: residues 134 to 152 (LTEK…DNHV), 177 to 187 (KINDKSDDTLH), and 207 to 216 (NEKEKDVNPK).

This is an uncharacterized protein from Caenorhabditis elegans.